A 251-amino-acid chain; its full sequence is tRNA (guanine-N(7)-)-methyltransferase (251 aa).

Residues Gly-72, 95–96, 132–133, and Leu-152 each bind S-adenosyl-L-methionine; these read EI and NA. The active site involves Asp-155. 230 to 232 contacts S-adenosyl-L-methionine; the sequence is SEE.

This sequence belongs to the class I-like SAM-binding methyltransferase superfamily. TrmB family.

It localises to the nucleus. The enzyme catalyses guanosine(46) in tRNA + S-adenosyl-L-methionine = N(7)-methylguanosine(46) in tRNA + S-adenosyl-L-homocysteine. It participates in tRNA modification; N(7)-methylguanine-tRNA biosynthesis. Its function is as follows. Catalyzes the formation of N(7)-methylguanine at position 46 (m7G46) in tRNA. This Drosophila willistoni (Fruit fly) protein is tRNA (guanine-N(7)-)-methyltransferase.